The following is a 127-amino-acid chain: UPF0251 protein Ccel_0627 (127 aa).

The protein belongs to the UPF0251 family.

In Ruminiclostridium cellulolyticum (strain ATCC 35319 / DSM 5812 / JCM 6584 / H10) (Clostridium cellulolyticum), this protein is UPF0251 protein Ccel_0627.